The primary structure comprises 478 residues: Allene oxide synthase 2 (478 aa).

3 residues coordinate heme b: Lys88, His119, and Lys123. Asn278 contacts (13S)-hydroperoxy-(9Z,11E,15Z)-octadecatrienoate. Lys427 and Cys429 together coordinate heme b.

Belongs to the cytochrome P450 family. Requires heme b as cofactor. As to expression, weakly expressed in roots, shoots, leaves and flowers.

It carries out the reaction (13S)-hydroperoxy-(9Z,11E,15Z)-octadecatrienoate = (9Z,13S,15Z)-12,13-epoxyoctadeca-9,11,15-trienoate + H2O. It participates in lipid metabolism; oxylipin biosynthesis. In terms of biological role, involved in the biosynthesis of jasmonic acid, a growth regulator that is implicated also as a signaling molecule in plant defense. Converts 13-hydroperoxylinolenic acid to 12,13-epoxylinolenic acid. The polypeptide is Allene oxide synthase 2 (CYP74A2) (Oryza sativa subsp. japonica (Rice)).